The following is a 409-amino-acid chain: NADH-quinone oxidoreductase subunit D (409 aa).

This sequence belongs to the complex I 49 kDa subunit family. NDH-1 is composed of 14 different subunits. Subunits NuoB, C, D, E, F, and G constitute the peripheral sector of the complex.

The protein resides in the cell inner membrane. It carries out the reaction a quinone + NADH + 5 H(+)(in) = a quinol + NAD(+) + 4 H(+)(out). Its function is as follows. NDH-1 shuttles electrons from NADH, via FMN and iron-sulfur (Fe-S) centers, to quinones in the respiratory chain. The immediate electron acceptor for the enzyme in this species is believed to be ubiquinone. Couples the redox reaction to proton translocation (for every two electrons transferred, four hydrogen ions are translocated across the cytoplasmic membrane), and thus conserves the redox energy in a proton gradient. The chain is NADH-quinone oxidoreductase subunit D from Campylobacter curvus (strain 525.92).